The following is a 280-amino-acid chain: Phosphatidylserine decarboxylase proenzyme (280 aa).

Catalysis depends on charge relay system; for autoendoproteolytic cleavage activity residues D88, H144, and S247. S247 (schiff-base intermediate with substrate; via pyruvic acid; for decarboxylase activity) is an active-site residue. A Pyruvic acid (Ser); by autocatalysis modification is found at S247.

The protein belongs to the phosphatidylserine decarboxylase family. PSD-B subfamily. Prokaryotic type I sub-subfamily. As to quaternary structure, heterodimer of a large membrane-associated beta subunit and a small pyruvoyl-containing alpha subunit. Requires pyruvate as cofactor. Post-translationally, is synthesized initially as an inactive proenzyme. Formation of the active enzyme involves a self-maturation process in which the active site pyruvoyl group is generated from an internal serine residue via an autocatalytic post-translational modification. Two non-identical subunits are generated from the proenzyme in this reaction, and the pyruvate is formed at the N-terminus of the alpha chain, which is derived from the carboxyl end of the proenzyme. The autoendoproteolytic cleavage occurs by a canonical serine protease mechanism, in which the side chain hydroxyl group of the serine supplies its oxygen atom to form the C-terminus of the beta chain, while the remainder of the serine residue undergoes an oxidative deamination to produce ammonia and the pyruvoyl prosthetic group on the alpha chain. During this reaction, the Ser that is part of the protease active site of the proenzyme becomes the pyruvoyl prosthetic group, which constitutes an essential element of the active site of the mature decarboxylase.

The protein resides in the cell membrane. It catalyses the reaction a 1,2-diacyl-sn-glycero-3-phospho-L-serine + H(+) = a 1,2-diacyl-sn-glycero-3-phosphoethanolamine + CO2. The protein operates within phospholipid metabolism; phosphatidylethanolamine biosynthesis; phosphatidylethanolamine from CDP-diacylglycerol: step 2/2. In terms of biological role, catalyzes the formation of phosphatidylethanolamine (PtdEtn) from phosphatidylserine (PtdSer). The chain is Phosphatidylserine decarboxylase proenzyme from Xanthomonas euvesicatoria pv. vesicatoria (strain 85-10) (Xanthomonas campestris pv. vesicatoria).